The sequence spans 439 residues: Indole-3-pyruvate monooxygenase YUCCA4 (439 aa).

49–54 provides a ligand contact to FAD; it reads GAGPAG. Residue 226-231 participates in NADP(+) binding; that stretch reads GCGNSG.

It belongs to the FMO family. It depends on FAD as a cofactor.

It catalyses the reaction indole-3-pyruvate + NADPH + O2 + H(+) = (indol-3-yl)acetate + CO2 + NADP(+) + H2O. Functionally, involved in auxin biosynthesis in anthers. This Oryza sativa subsp. japonica (Rice) protein is Indole-3-pyruvate monooxygenase YUCCA4.